The following is a 216-amino-acid chain: Adenylate kinase (216 aa).

Gly10–Thr15 serves as a coordination point for ATP. The tract at residues Ser30–Val59 is NMP. Residues Thr31, Arg36, Gln57 to Val59, and Gln92 contribute to the AMP site. Residues Gly122–Asp159 form an LID region. Residues Arg123 and Thr132 to Tyr133 each bind ATP. The AMP site is built by Arg156 and Arg167. Gln202 provides a ligand contact to ATP.

It belongs to the adenylate kinase family. As to quaternary structure, monomer.

It is found in the cytoplasm. The enzyme catalyses AMP + ATP = 2 ADP. It functions in the pathway purine metabolism; AMP biosynthesis via salvage pathway; AMP from ADP: step 1/1. In terms of biological role, catalyzes the reversible transfer of the terminal phosphate group between ATP and AMP. Plays an important role in cellular energy homeostasis and in adenine nucleotide metabolism. The chain is Adenylate kinase from Francisella philomiragia subsp. philomiragia (strain ATCC 25017 / CCUG 19701 / FSC 153 / O#319-036).